Here is a 1391-residue protein sequence, read N- to C-terminus: Leucine-rich PPR motif-containing protein, mitochondrial (1391 aa).

A mitochondrion-targeting transit peptide spans 1-42; it reads MSALLAGARFLLRPGLRALPAPCVRLSPGQGRYLNNTPGHFA. 15 PPR repeats span residues 110-144, 145-179, 180-214, 215-249, 250-284, 389-425, 704-738, 741-775, 779-813, 815-850, 948-982, 1028-1062, 1063-1093, 1100-1134, and 1310-1344; these read LLRS…GAVF, DVSH…NVQP, NRVT…DLPI, TEAV…GIEP, GPET…EGSL, NLHS…GMPV, AIGT…DSSA, DTSK…DVPL, TTTS…GLAK, TSNL…NCMP, RDDM…NVIP, PESS…GTAM, SASA…AENH, NDAA…DKVP, and RETA…SVSP. The interval 1118-1387 is RNA-binding; the sequence is KDALASLKAM…KLKKDKADSY (270 aa).

It is found in the mitochondrion. Its subcellular location is the nucleus. May play a role in RNA metabolism in both nuclei and mitochondria. May bind mature mRNA in the nucleus outer membrane. In mitochondria binds to poly(A) mRNA. May be involved in transcription regulation. Binds single-stranded DNA. This Xenopus tropicalis (Western clawed frog) protein is Leucine-rich PPR motif-containing protein, mitochondrial (lrpprc).